The sequence spans 212 residues: Protein Rv0786c (212 aa).

This chain is Protein Rv0786c, found in Mycobacterium tuberculosis (strain ATCC 25618 / H37Rv).